We begin with the raw amino-acid sequence, 179 residues long: Lebocin-4 (179 aa).

Residues 1-16 (MYKFLVFSSVLVLFFA) form the signal peptide. Residues 17–120 (QASCQRFIQP…RPIESHRNTR (104 aa)) constitute a propeptide that is removed on maturation. T135 is a glycosylation site (O-linked (GalNAc...) threonine). A propeptide spanning residues 153–179 (RRHASDDQEELRHHNEHFLIPRDILQD) is cleaved from the precursor.

The protein belongs to the lebocin family. O-glycosylation is important for the antibacterial activity of lebocin. Hemolymph. Produced in fat body.

It localises to the secreted. Antibacterial peptide. The polypeptide is Lebocin-4 (LEB4) (Bombyx mori (Silk moth)).